A 783-amino-acid polypeptide reads, in one-letter code: E3 UFM1-protein ligase 1 homolog (783 aa).

The segment at 404–482 (SNSSANFDAD…AGSSRKSVKP (79 aa)) is disordered. A compositionally biased stretch (basic residues) spans 445 to 457 (KSTKKHQRGRAAA).

Belongs to the UFL1 family.

E3 UFM1-protein ligase that mediates ufmylation of target proteins. This Drosophila mojavensis (Fruit fly) protein is E3 UFM1-protein ligase 1 homolog.